A 127-amino-acid chain; its full sequence is Large ribosomal subunit protein bL19 (127 aa).

Belongs to the bacterial ribosomal protein bL19 family.

This protein is located at the 30S-50S ribosomal subunit interface and may play a role in the structure and function of the aminoacyl-tRNA binding site. This Acidovorax ebreus (strain TPSY) (Diaphorobacter sp. (strain TPSY)) protein is Large ribosomal subunit protein bL19.